The primary structure comprises 545 residues: Betaine receptor acr-23 (545 aa).

A signal peptide spans 1–19; sequence MHRIYTFLIFISQLALGLS. The Extracellular segment spans residues 20–244; it reads NNPDIPIQYE…DVVIQRKPLY (225 aa). Residues Asn53 and Asn97 are each glycosylated (N-linked (GlcNAc...) asparagine). Intrachain disulfides connect Cys157–Cys171 and Cys224–Cys225. Asn228 is a glycosylation site (N-linked (GlcNAc...) asparagine). The chain crosses the membrane as a helical span at residues 245–265; it reads YVLNLIAPTAVITFISIIGFF. Asn276 carries an N-linked (GlcNAc...) asparagine glycan. 2 helical membrane passes run 287 to 307 and 317 to 337; these read EKIT…FMVS and VPLI…GTLA. Over 338–512 the chain is Cytoplasmic; sequence ASSVIFVQKL…WDWVAAVLER (175 aa). The chain crosses the membrane as a helical span at residues 513 to 533; it reads VFLIFFTICFLFSAIGINLYG.

The protein belongs to the ligand-gated ion channel (TC 1.A.9) family. Acetylcholine receptor (TC 1.A.9.1) subfamily. Expressed in the body wall muscles that are arranged into four longitudinal bundles, some mechanosensory neurons, the head muscles and multiple interneurons. Not expressed in motor neurons (at protein level).

Its subcellular location is the cell membrane. Betaine receptor that functions as a ligand-gated non-selective monovalent cation channel in mechanosensory neurons to maintain basal levels of locomotion. The channel is permeable to Na(+) and K(+) but not to Ba(2+) or Ca(2+) ions. Elicits current in response to betaine, very weak current in response to choline, virtually no current in response to acetylcholine and nicotine, and no current in response to glycine and GABA. The polypeptide is Betaine receptor acr-23 (Caenorhabditis elegans).